A 407-amino-acid polypeptide reads, in one-letter code: uncharacterized protein (407 aa).

Residues 10–37 adopt a coiled-coil conformation; it reads DKLEQLANDVVTELTDMENKYKDLHVEL.

This is an uncharacterized protein from Bacillus subtilis (strain 168).